The following is a 376-amino-acid chain: 23S rRNA (uracil(747)-C(5))-methyltransferase RlmC (376 aa).

Residues C3, C11, C14, and C87 each contribute to the [4Fe-4S] cluster site. Residues Q212, F241, E262, and N307 each coordinate S-adenosyl-L-methionine. C334 functions as the Nucleophile in the catalytic mechanism.

It belongs to the class I-like SAM-binding methyltransferase superfamily. RNA M5U methyltransferase family. RlmC subfamily.

The enzyme catalyses uridine(747) in 23S rRNA + S-adenosyl-L-methionine = 5-methyluridine(747) in 23S rRNA + S-adenosyl-L-homocysteine + H(+). Its function is as follows. Catalyzes the formation of 5-methyl-uridine at position 747 (m5U747) in 23S rRNA. This chain is 23S rRNA (uracil(747)-C(5))-methyltransferase RlmC, found in Salmonella choleraesuis (strain SC-B67).